We begin with the raw amino-acid sequence, 384 residues long: Queuine tRNA-ribosyltransferase (384 aa).

D92 (proton acceptor) is an active-site residue. Residues D92–F96, D146, Q192, and G219 each bind substrate. Residues G250–E256 are RNA binding. D269 serves as the catalytic Nucleophile. Residues T274 to R278 are RNA binding; important for wobble base 34 recognition. C307, C309, C312, and H338 together coordinate Zn(2+).

It belongs to the queuine tRNA-ribosyltransferase family. Homodimer. Within each dimer, one monomer is responsible for RNA recognition and catalysis, while the other monomer binds to the replacement base PreQ1. Requires Zn(2+) as cofactor.

The enzyme catalyses 7-aminomethyl-7-carbaguanine + guanosine(34) in tRNA = 7-aminomethyl-7-carbaguanosine(34) in tRNA + guanine. It participates in tRNA modification; tRNA-queuosine biosynthesis. In terms of biological role, catalyzes the base-exchange of a guanine (G) residue with the queuine precursor 7-aminomethyl-7-deazaguanine (PreQ1) at position 34 (anticodon wobble position) in tRNAs with GU(N) anticodons (tRNA-Asp, -Asn, -His and -Tyr). Catalysis occurs through a double-displacement mechanism. The nucleophile active site attacks the C1' of nucleotide 34 to detach the guanine base from the RNA, forming a covalent enzyme-RNA intermediate. The proton acceptor active site deprotonates the incoming PreQ1, allowing a nucleophilic attack on the C1' of the ribose to form the product. After dissociation, two additional enzymatic reactions on the tRNA convert PreQ1 to queuine (Q), resulting in the hypermodified nucleoside queuosine (7-(((4,5-cis-dihydroxy-2-cyclopenten-1-yl)amino)methyl)-7-deazaguanosine). In Desulfosudis oleivorans (strain DSM 6200 / JCM 39069 / Hxd3) (Desulfococcus oleovorans), this protein is Queuine tRNA-ribosyltransferase.